The following is a 352-amino-acid chain: Mitochondrial ubiquitin ligase activator of NFKB 1 (352 aa).

Residues 1 to 8 lie on the Cytoplasmic side of the membrane; that stretch reads MENGGRPS. Residues 9-29 traverse the membrane as a helical segment; that stretch reads LCQFILLGTTSVVTAALYSVY. Topologically, residues 30-238 are mitochondrial intermembrane; that stretch reads RQKAWVSQEL…LLQRQESSVR (209 aa). Residue Lys-52 forms a Glycyl lysine isopeptide (Lys-Gly) (interchain with G-Cter in ubiquitin) linkage. The helical transmembrane segment at 239–259 threads the bilayer; that stretch reads LWKVLALVFGFATCATLFFIL. Residues 260–352 lie on the Cytoplasmic side of the membrane; sequence RKQYLQRQER…ITRVIPLYNS (93 aa). Glycyl lysine isopeptide (Lys-Gly) (interchain with G-Cter in ubiquitin) cross-links involve residues Lys-273 and Lys-299. Residues 302–340 form an RING-type zinc finger; that stretch reads CVVCLSSFKSCVFLECGHVCSCTECYRALPEPKKCPICR.

Homooligomer. Interacts with MAP3K7/TAK1. Interacts with UBC9. Interacts with and sumoylates DNM1L. Interacts with MAVS. Interacts with TP53 (via N-terminus); the interaction leads to ubiquitination and proteasomal degradation of TP53. Ubiquitinated by PRKN during mitophagy, leading to its degradation and enhancement of mitophagy. Deubiquitinated by USP30.

Its subcellular location is the mitochondrion outer membrane. The protein resides in the peroxisome. The catalysed reaction is S-ubiquitinyl-[E2 ubiquitin-conjugating enzyme]-L-cysteine + [acceptor protein]-L-lysine = [E2 ubiquitin-conjugating enzyme]-L-cysteine + N(6)-ubiquitinyl-[acceptor protein]-L-lysine.. The protein operates within protein modification; protein ubiquitination. Its pathway is protein modification; protein sumoylation. In terms of biological role, exhibits weak E3 ubiquitin-protein ligase activity. E3 ubiquitin ligases accept ubiquitin from an E2 ubiquitin-conjugating enzyme in the form of a thioester and then directly transfer the ubiquitin to targeted substrates. Can ubiquitinate AKT1 preferentially at 'Lys-284' involving 'Lys-48'-linked polyubiquitination and seems to be involved in regulation of Akt signaling by targeting phosphorylated Akt to proteasomal degradation. Mediates polyubiquitination of cytoplasmic TP53 at 'Lys-24' which targets TP53 for proteasomal degradation, thus reducing TP53 levels in the cytoplasm and mitochondrion. Proposed to preferentially act as a SUMO E3 ligase at physiological concentrations. Plays a role in the control of mitochondrial morphology by promoting mitochondrial fragmentation, and influences mitochondrial localization. Likely to promote mitochondrial fission through negatively regulating the mitochondrial fusion proteins MFN1 and MFN2, acting in a pathway that is parallel to the PRKN/PINK1 regulatory pathway. May also be involved in the sumoylation of the membrane fission protein DNM1L. Inhibits cell growth. When overexpressed, activates JNK through MAP3K7/TAK1 and induces caspase-dependent apoptosis. Involved in the modulation of innate immune defense against viruses by inhibiting RIGI-dependent antiviral response. Can mediate RIGI sumoylation and disrupt its polyubiquitination. The sequence is that of Mitochondrial ubiquitin ligase activator of NFKB 1 (MUL1) from Macaca fascicularis (Crab-eating macaque).